Reading from the N-terminus, the 82-residue chain is MDPGPKGHCHCGGHGHPPGHCGPPPGHGPGPCGPPPHHGPGPCGPPPGHGPGPCGPPPHHGPGPCGPPPGHGPGHPPPGPHH.

The segment at 20–82 (HCGPPPGHGP…PGHPPPGPHH (63 aa)) is disordered.

This is Proline, histidine and glycine-rich protein 1 (PHGR1) from Homo sapiens (Human).